A 1162-amino-acid polypeptide reads, in one-letter code: Protein OBERON 4 (1162 aa).

Composition is skewed to basic and acidic residues over residues 1 to 19 (MKRLRSSDDLDFCNDKNVD), 61 to 77 (NRDLDNHRPDARYHRSE), 90 to 99 (FRSERERPNR), and 118 to 134 (VDDRDRRLRDAERDRSL). 4 disordered regions span residues 1-235 (MKRL…PSCS), 251-307 (IGKS…VSQN), 321-346 (DHRDGTITASANKITDTVDEKGDKDE), and 441-485 (SKTE…QSGV). The segment covering 135–146 (KSPSWSRDSPNE) has biased composition (polar residues). A compositionally biased stretch (basic and acidic residues) spans 148–157 (SKFKPLDSRN). Residues 163–182 (KSLASPTWSKDSGSEQSKSV) are compositionally biased toward polar residues. Positions 203–213 (EMEEGELEPEP) are enriched in acidic residues. 4 stretches are compositionally biased toward basic and acidic residues: residues 225–235 (TKHDCKLPSCS), 263–300 (SNRELSHVGGNREMETTDSMTDKKSVEDAENVPEHATE), 336–346 (DTVDEKGDKDE), and 441–457 (SKTEDLHDKDKDEKDDN). The PHD-type zinc-finger motif lies at 835–899 (ACMCLVCSNF…QFHCVACNHP (65 aa)). Residues 1065 to 1161 (MKQAEAEMFQ…KMEMTKQSLA (97 aa)) are a coiled coil.

As to quaternary structure, self-interacts. Interacts with OBE1 and OBE2. Interacts with OBE3.

Its subcellular location is the nucleus. Its function is as follows. Probable transcription factor that functions redundantly with OBE3 in specification of the hypophysis and establishment of the embryonic root. Involved in the activation of ARF5/MP-dependent gene expression during embryonic root meristem initiation. Involved in shoot meristem homeostasis. This chain is Protein OBERON 4, found in Arabidopsis thaliana (Mouse-ear cress).